The sequence spans 92 residues: Small ribosomal subunit protein uS19 (92 aa).

The protein belongs to the universal ribosomal protein uS19 family.

Protein S19 forms a complex with S13 that binds strongly to the 16S ribosomal RNA. This is Small ribosomal subunit protein uS19 from Exiguobacterium sibiricum (strain DSM 17290 / CCUG 55495 / CIP 109462 / JCM 13490 / 255-15).